Here is a 169-residue protein sequence, read N- to C-terminus: Regulator of ribonuclease activity A (169 aa).

Belongs to the RraA family. In terms of assembly, homotrimer. Binds to both RNA-binding sites in the C-terminal region of Rne and to RhlB.

The protein localises to the cytoplasm. Its function is as follows. Globally modulates RNA abundance by binding to RNase E (Rne) and regulating its endonucleolytic activity. Can modulate Rne action in a substrate-dependent manner by altering the composition of the degradosome. Modulates RNA-binding and helicase activities of the degradosome. In Photorhabdus laumondii subsp. laumondii (strain DSM 15139 / CIP 105565 / TT01) (Photorhabdus luminescens subsp. laumondii), this protein is Regulator of ribonuclease activity A.